The sequence spans 63 residues: Sarcotoxin-1A (63 aa).

Positions 1 to 23 (MNFQNIFIFVALILAVFAGQSQA) are cleaved as a signal peptide. R62 is subject to Arginine amide.

Belongs to the cecropin family.

The protein resides in the secreted. In terms of biological role, sarcotoxins, which are potent bactericidal proteins, are produced in response to injury. They are cytotoxic to both Gram-positive and Gram-negative bacteria. The protein is Sarcotoxin-1A of Sarcophaga peregrina (Flesh fly).